A 172-amino-acid chain; its full sequence is C-phycocyanin beta chain (172 aa).

Residues Asn35, Asp39, Asn72, Arg77, Cys82, 82 to 88 (CLRDMEI), 149 to 151 (TTG), and Cys153 contribute to the (2R,3E)-phycocyanobilin site. Asn72 carries the N4-methylasparagine modification.

Belongs to the phycobiliprotein family. As to quaternary structure, heterodimer of an alpha and a beta subunit. Dimers further assemble into trimers and the trimers into hexamers. The basic functional unit of phycobiliproteins is a ring-shaped hexamer formed from two back-to-back trimers contacting via the alpha chain subunits. The trimers are composed of alpha/beta subunit heterodimers arranged around a three-fold axis of symmetry. The phycoerythrins also contain a gamma subunit which is located in the center of the hexamer. Contains two covalently linked phycocyanobilin chromophores.

Its subcellular location is the plastid. The protein localises to the chloroplast thylakoid membrane. In terms of biological role, light-harvesting photosynthetic tetrapyrrole chromophore-protein from the phycobiliprotein complex (phycobilisome, PBS). Phycocyanin is the major phycobiliprotein in the PBS rod. This Galdieria sulphuraria (Red alga) protein is C-phycocyanin beta chain (cpcB).